A 300-amino-acid chain; its full sequence is Porphobilinogen deaminase (300 aa).

C242 is subject to S-(dipyrrolylmethanemethyl)cysteine.

Belongs to the HMBS family. As to quaternary structure, monomer. Dipyrromethane is required as a cofactor.

The catalysed reaction is 4 porphobilinogen + H2O = hydroxymethylbilane + 4 NH4(+). Its pathway is porphyrin-containing compound metabolism; protoporphyrin-IX biosynthesis; coproporphyrinogen-III from 5-aminolevulinate: step 2/4. Functionally, tetrapolymerization of the monopyrrole PBG into the hydroxymethylbilane pre-uroporphyrinogen in several discrete steps. The sequence is that of Porphobilinogen deaminase from Rickettsia bellii (strain OSU 85-389).